A 545-amino-acid chain; its full sequence is Chaperonin GroEL (545 aa).

Residues Thr-30–Pro-33, Lys-51, Asp-87–Thr-91, Gly-415, and Asp-494 each bind ATP.

Belongs to the chaperonin (HSP60) family. As to quaternary structure, forms a cylinder of 14 subunits composed of two heptameric rings stacked back-to-back. Interacts with the co-chaperonin GroES.

The protein localises to the cytoplasm. The enzyme catalyses ATP + H2O + a folded polypeptide = ADP + phosphate + an unfolded polypeptide.. In terms of biological role, together with its co-chaperonin GroES, plays an essential role in assisting protein folding. The GroEL-GroES system forms a nano-cage that allows encapsulation of the non-native substrate proteins and provides a physical environment optimized to promote and accelerate protein folding. The polypeptide is Chaperonin GroEL (Helicobacter hepaticus (strain ATCC 51449 / 3B1)).